Reading from the N-terminus, the 694-residue chain is Ferric reductase transmembrane component 5 (694 aa).

Residues 1–19 (MLFARLVLLLVYLAPGSLA) form the signal peptide. The Extracellular portion of the chain corresponds to 20 to 163 (KPASTKKRTQ…LDNIDKGNVY (144 aa)). N-linked (GlcNAc...) asparagine glycosylation is present at Asn117. The helical transmembrane segment at 164–184 (GVTICLYWIGVLFIAAVYHFL) threads the bilayer. At 185–222 (NFSRLKQTVFKNKVSAFLRGHYVLPALVHNHAMSVGRW) the chain is on the cytoplasmic side. Residues 223–243 (FFIGLVPTRLETLVLFGYVLL) form a helical membrane-spanning segment. Over 244–267 (HGFLLSSYNFDHNELLSDRRSQVL) the chain is Extracellular. A helical transmembrane segment spans residues 268 to 288 (IFLSDRAGILAFAHFPLIVLF). The 135-residue stretch at 274 to 408 (AGILAFAHFP…GWGEWIMACA (135 aa)) folds into the Ferric oxidoreductase domain. Residues 289–311 (GGKNSTMTWLTGIRYTAFITYHK) are Cytoplasmic-facing. Heme contacts are provided by His310 and His324. Residues 312–334 (WLGRFMLVDCTIHAIGYTYHAYI) traverse the membrane as a helical segment. At 335–347 (ENYWKYVKYSDLW) the chain is on the extracellular side. A helical transmembrane segment spans residues 348-368 (TSGRHAMIIVGILVFFSFFFF). The Cytoplasmic portion of the chain corresponds to 369–371 (RRH). Residues 372 to 392 (YYELFVITHIILAIGFFHACW) form a helical membrane-spanning segment. Heme-binding residues include His380 and His394. Topologically, residues 393 to 403 (KHCYKLGWGEW) are extracellular. The helical transmembrane segment at 404–424 (IMACALFWIADRILRLIKIAI) threads the bilayer. An FAD-binding FR-type domain is found at 409 to 528 (LFWIADRILR…EGPYGQSTRT (120 aa)). Over 425–694 (FGMPWAKLKL…IEYVEEFQNW (270 aa)) the chain is Cytoplasmic. FAD is bound at residue 473–479 (HPFTVMD). NADP(+)-binding positions include 520-523 (GPYG) and 660-661 (CG).

Belongs to the ferric reductase (FRE) family. It depends on FAD as a cofactor.

It is found in the cell membrane. The catalysed reaction is 2 a Fe(II)-siderophore + NADP(+) + H(+) = 2 a Fe(III)-siderophore + NADPH. Functionally, metalloreductase responsible for reducing extracellular iron and copper prior to import. Catalyzes the reductive uptake of Fe(3+)-salts and Fe(3+) bound to catecholate or hydroxamate siderophores. Fe(3+) is reduced to Fe(2+), which then dissociates from the siderophore and can be imported by the high-affinity Fe(2+) transport complex in the plasma membrane. This Saccharomyces cerevisiae (strain ATCC 204508 / S288c) (Baker's yeast) protein is Ferric reductase transmembrane component 5 (FRE5).